We begin with the raw amino-acid sequence, 548 residues long: Eukaryotic translation initiation factor 3 subunit D (548 aa).

Residue Lys-53 is modified to N6-acetyllysine. The residue at position 161 (Ser-161) is a Phosphoserine. The segment at 285-299 (DFDLLTVSETANEPP) is RNA gate. Positions 523–548 (PDGTFSSDEDEEEEEEEEEEEEEEET) are disordered. Residues Ser-528 and Ser-529 each carry the phosphoserine modification. A compositionally biased stretch (acidic residues) spans 529–548 (SDEDEEEEEEEEEEEEEEET).

This sequence belongs to the eIF-3 subunit D family. In terms of assembly, component of the eukaryotic translation initiation factor 3 (eIF-3) complex, which is composed of 13 subunits: EIF3A, EIF3B, EIF3C, EIF3D, EIF3E, EIF3F, EIF3G, EIF3H, EIF3I, EIF3J, EIF3K, EIF3L and EIF3M. The eIF-3 complex appears to include 3 stable modules: module A is composed of EIF3A, EIF3B, EIF3G and EIF3I; module B is composed of EIF3F, EIF3H, and EIF3M; and module C is composed of EIF3C, EIF3D, EIF3E, EIF3K and EIF3L. EIF3C of module C binds EIF3B of module A and EIF3H of module B, thereby linking the three modules. EIF3J is a labile subunit that binds to the eIF-3 complex via EIF3B. The eIF-3 complex interacts with RPS6KB1 under conditions of nutrient depletion. Mitogenic stimulation leads to binding and activation of a complex composed of MTOR and RPTOR, leading to phosphorylation and release of RPS6KB1 and binding of EIF4B to eIF-3.

It localises to the cytoplasm. MRNA cap-binding component of the eukaryotic translation initiation factor 3 (eIF-3) complex, a complex required for several steps in the initiation of protein synthesis of a specialized repertoire of mRNAs. The eIF-3 complex associates with the 40S ribosome and facilitates the recruitment of eIF-1, eIF-1A, eIF-2:GTP:methionyl-tRNAi and eIF-5 to form the 43S pre-initiation complex (43S PIC). The eIF-3 complex stimulates mRNA recruitment to the 43S PIC and scanning of the mRNA for AUG recognition. The eIF-3 complex is also required for disassembly and recycling of post-termination ribosomal complexes and subsequently prevents premature joining of the 40S and 60S ribosomal subunits prior to initiation. The eIF-3 complex specifically targets and initiates translation of a subset of mRNAs involved in cell proliferation, including cell cycling, differentiation and apoptosis, and uses different modes of RNA stem-loop binding to exert either translational activation or repression. In the eIF-3 complex, EIF3D specifically recognizes and binds the 7-methylguanosine cap of a subset of mRNAs. The protein is Eukaryotic translation initiation factor 3 subunit D of Macaca fascicularis (Crab-eating macaque).